The sequence spans 284 residues: Cystinosin homolog (284 aa).

Helical transmembrane passes span 3 to 23 (ALSIISIIIGWIYFACWSLSF), 37 to 57 (IGLSFDFLLFNITGYACYSVF), 86 to 106 (IAFAIHGFVLTAITIIQCFIY), 116 to 136 (LGIGIATLIWVSLIVMTILGF), 139 to 159 (VFTWLWVINYYSYVKLFITFI), 181 to 201 (NVLLDFSGGVLSLLQMFLDVA), and 216 to 236 (LGLSLFSIAFDILFIIQHYIL). Residues 4 to 70 (LSIISIIIGW…LYFDKLVKNE (67 aa)) enclose the PQ-loop 1 domain. The PQ-loop 2 domain maps to 154-208 (LFITFIKYIPQAYLNFKNKSTSGWSVHNVLLDFSGGVLSLLQMFLDVADSGNWNI). The segment at 247–269 (NLNDNNIPNNNNNNNNNINNNTP) is disordered.

Belongs to the cystinosin family.

It localises to the lysosome membrane. It catalyses the reaction L-cystine(out) + H(+)(out) = L-cystine(in) + H(+)(in). Its function is as follows. Cystine/H(+) symporter that mediates export of cystine, the oxidized dimer of cysteine, from lysosomes. This Dictyostelium discoideum (Social amoeba) protein is Cystinosin homolog (ctns).